The primary structure comprises 163 residues: Campylobacter invasion antigen D (163 aa).

Residues 135–145 carry the MKD motif; the sequence is KKDDLENRLNL.

As to quaternary structure, interacts with the host cell protein IQGAP1, thus displacing RACGAP1 from the IQGAP1 complex.

Its subcellular location is the secreted. The protein localises to the host cytoplasm. The protein resides in the host cytosol. Functionally, effector protein required for the development of acute disease and colon inflammatory lesions. Required for maximal host cell invasion and maximal secretion of the inflammatory chemokine interleukin-8 (IL-8) from host cells. Acts by activating the host MAP kinase signaling pathways ERK-1/2 and p38 to promote both cellular invasion and the release of IL-8. CiaD mediated activation of ERK-1/2 leads to the phosphorylation of host cortactin (CTTN) on serine residues and association of cortactin with N-WASP, promoting actin cytoskeleton rearrangement, membrane ruffling and host cell invasion. In addition, maximal host cell invasion requires interaction with the host cell protein IQGAP1, a Ras GTPase-activating-like protein. Binding to IQGAP1 facilitates the activation of the Rho GTPases RAC1 and CDC42, further promoting actin reorganization and bacterial uptake. CiaD promotes RAC1 activation by excluding RACGAP1 from the IQGAP1 complex, preventing the deactivation of RAC1. CiaD probably activates ERK signaling upstream or independently of IQGAP1. The protein is Campylobacter invasion antigen D of Campylobacter jejuni subsp. jejuni serotype O:2 (strain ATCC 700819 / NCTC 11168).